The primary structure comprises 508 residues: Hydroxymethylglutaryl-CoA synthase, mitochondrial (508 aa).

A mitochondrion-targeting transit peptide spans 1–37; it reads MQRLLTPVRQVLQVKRVMQEASLLPARLLPAAHPSFS. An N6-succinyllysine modification is found at Lys-52. Residues Glu-80 and Ala-81 each coordinate (3S)-3-hydroxy-3-methylglutaryl-CoA. The active-site Proton donor/acceptor is the Glu-132. (3S)-3-hydroxy-3-methylglutaryl-CoA-binding residues include Cys-166, Asn-204, and Thr-208. Residue Cys-166 is the Acyl-thioester intermediate of the active site. Lys-243 is modified (N6-acetyllysine). The residue at position 256 (Lys-256) is an N6-acetyllysine; alternate. Lys-256 is modified (N6-succinyllysine; alternate). The (3S)-3-hydroxy-3-methylglutaryl-CoA site is built by Ser-258 and His-301. The active-site Proton donor/acceptor is His-301. N6-acetyllysine is present on Lys-306. Residue Lys-310 coordinates (3S)-3-hydroxy-3-methylglutaryl-CoA. Lys-310 carries the N6-acetyllysine; alternate modification. At Lys-310 the chain carries N6-succinyllysine; alternate. N6-succinyllysine is present on Lys-333. N6-acetyllysine; alternate occurs at positions 342, 350, 354, and 358. N6-succinyllysine; alternate occurs at positions 342, 350, 354, and 358. Residues Asn-380 and Ser-414 each contribute to the (3S)-3-hydroxy-3-methylglutaryl-CoA site. A Phosphoserine modification is found at Ser-433. Lys-437 is modified (N6-acetyllysine). Position 440 is a phosphoserine (Ser-440). Position 447 is an N6-acetyllysine; alternate (Lys-447). N6-succinyllysine; alternate is present on Lys-447. Ser-456 is modified (phosphoserine). N6-acetyllysine; alternate is present on Lys-473. Lys-473 bears the N6-succinyllysine; alternate mark. Phosphoserine is present on Ser-477.

The protein belongs to the thiolase-like superfamily. HMG-CoA synthase family. In terms of assembly, homodimer. Succinylated. Desuccinylated by SIRT5. Succinylation, at least at Lys-310, inhibits the enzymatic activity.

It is found in the mitochondrion. It carries out the reaction acetoacetyl-CoA + acetyl-CoA + H2O = (3S)-3-hydroxy-3-methylglutaryl-CoA + CoA + H(+). The protein operates within metabolic intermediate biosynthesis; (R)-mevalonate biosynthesis; (R)-mevalonate from acetyl-CoA: step 2/3. In terms of biological role, catalyzes the first irreversible step in ketogenesis, condensing acetyl-CoA to acetoacetyl-CoA to form HMG-CoA, which is converted by HMG-CoA reductase (HMGCR) into mevalonate. This Bos taurus (Bovine) protein is Hydroxymethylglutaryl-CoA synthase, mitochondrial (HMGCS2).